The primary structure comprises 409 residues: MEESWEAAPGGQAGAELPMEPVGSLVPTLEQPQVPAKVRQPEGPESSPSPAGAVEKAAGAGLEPSSKKKPPSPRPGSPRVPPLSLGYGVCPEPPSPGPALVKLPRNGEAPGAEPAPSAWAPMELQVDVRVKPVGAAGGSSTPSPRPSTRFLKVPVPESPAFSRHADPAHQLLLRAPSQGGTWGRRSPLAAARTESGCDAEGRASPAEGSAGSPGSPTCCRCKELGLEKEDAALLPRAGLDGDEKLPRAVTLTGLPMYVKSLYWALAFMAVLLAVSGVVIVVLASRAGARCQQCPPGWVLSEEHCYYFSAEAQAWEASQAFCSAYHATLPLLSHTQDFLGRYPVSRHSWVGAWRGPQGWHWIDEAPLPPQLLPEDGEDNLDINCGALEEGTLVAANCSTPRPWVCAKGTQ.

Residues Met1–Ala120 are disordered. Residues Pro41 to Ala53 are compositionally biased toward low complexity. A compositionally biased stretch (pro residues) spans Ser72–Pro81. Residues Pro104–Ala120 are compositionally biased toward low complexity. Ser158 bears the Phosphoserine mark. The interval Thr193–Pro216 is disordered. The segment covering Arg202–Pro216 has biased composition (low complexity). The chain crosses the membrane as a helical span at residues Trp263–Ala283. The C-type lectin domain maps to Ser300–Ala405. 2 disulfide bridges follow: Cys321–Cys404 and Cys383–Cys396.

The protein resides in the membrane. This chain is Killer cell lectin-like receptor subfamily G member 2 (KLRG2), found in Homo sapiens (Human).